The sequence spans 273 residues: Ribosomal RNA small subunit methyltransferase A (273 aa).

Residues N18, L20, G45, E66, D91, and N113 each contribute to the S-adenosyl-L-methionine site.

Belongs to the class I-like SAM-binding methyltransferase superfamily. rRNA adenine N(6)-methyltransferase family. RsmA subfamily.

The protein resides in the cytoplasm. It carries out the reaction adenosine(1518)/adenosine(1519) in 16S rRNA + 4 S-adenosyl-L-methionine = N(6)-dimethyladenosine(1518)/N(6)-dimethyladenosine(1519) in 16S rRNA + 4 S-adenosyl-L-homocysteine + 4 H(+). In terms of biological role, specifically dimethylates two adjacent adenosines (A1518 and A1519) in the loop of a conserved hairpin near the 3'-end of 16S rRNA in the 30S particle. May play a critical role in biogenesis of 30S subunits. In Escherichia coli O157:H7, this protein is Ribosomal RNA small subunit methyltransferase A.